Reading from the N-terminus, the 189-residue chain is GTP cyclohydrolase 1 (189 aa).

Residues C78, H81, and C150 each contribute to the Zn(2+) site.

The protein belongs to the GTP cyclohydrolase I family. Toroid-shaped homodecamer, composed of two pentamers of five dimers.

The catalysed reaction is GTP + H2O = 7,8-dihydroneopterin 3'-triphosphate + formate + H(+). It functions in the pathway cofactor biosynthesis; 7,8-dihydroneopterin triphosphate biosynthesis; 7,8-dihydroneopterin triphosphate from GTP: step 1/1. In Bacillus pumilus (strain SAFR-032), this protein is GTP cyclohydrolase 1.